The following is a 254-amino-acid chain: Photosystem II 22 kDa protein 2, chloroplastic (254 aa).

The N-terminal 38 residues, 1–38 (MALQQSMAMPMMVVSGLGTAPRSSPMVQLQRMKKHLVV), are a transit peptide targeting the chloroplast. 2 consecutive repeat copies span residues 42–148 (FKSR…FVDD) and 149–253 (ATGL…DNDD). A run of 4 helical transmembrane segments spans residues 86 to 106 (VAML…KGIL), 120 to 140 (AEPL…GALG), 184 to 204 (LFVG…EIIT), and 219 to 239 (PINE…FAAI).

This sequence belongs to the ELIP/psbS family.

Its subcellular location is the plastid. The protein localises to the chloroplast thylakoid membrane. Functionally, involved in high light-mediated energy-dependent nonphotochemical quenching (NPQ, qE) and thermal dissipation (TD) thus regulating energy conversion in photosystem II and protecting from photoinhibition. Also seems to regulate quantum yield of electron transport in fluctuating light conditions. This is Photosystem II 22 kDa protein 2, chloroplastic from Oryza sativa subsp. indica (Rice).